Consider the following 441-residue polypeptide: MKAISLGLISSIIFSIVLAKNSSGSGSSTGCFGCFRKKPKKKILATEVAKPVKAPETADFDPKLPNLKFIEEFEPITIEGCKSRLHELDEPFVSETDGMIIDKVTGFSRRENDSVLSGWYIRPYEEGYENMIKVNFIPLREYYKRMENRPPKQYDGPPPIPDMPQGYVPPKKEEIPVEQYVIQLSEEDPYLLQEEDALSLMEYDAETLNEGDAETLNEGDAETLNEYDAGTLNEEDAGTTNEAGEGTTNEEGEGAANEYDAETLNEYDADTLNEYDAGTLNEYDAGTLNEEEGSTTNEAGEGTSNEAGEGTANDDEELDEEVASIFDDDEHADDLSLLDYDENSNENQENVKKGNENEGEQKGNENEGEQKGKKKKAKEKSKKKVKNKPTMTTKKKKKKEKKKKKKEKEKKKEKKVKVEVIMDHFSEMEKMMNNKIKHWNK.

Positions 1 to 15 form a signal peptide, or 24; the sequence is MKAISLGLISSIIFS. 2 N-linked (GlcNAc...) asparagine glycosylation sites follow: Asn21 and Asn112. Repeat copies occupy residues 186–193, 194–201, 202–209, 210–217, 218–225, 226–233, 234–241, 242–249, 250–257, 258–265, 266–273, 274–281, 282–289, 290–297, 298–305, 306–313, 353–360, and 361–368. A 16 X 8 AA tandem repeats region spans residues 186 to 313; it reads EEDPYLLQEE…SNEAGEGTAN (128 aa). The interval 232–416 is disordered; the sequence is LNEEDAGTTN…EKEKKKEKKV (185 aa). Positions 238 to 247 are enriched in low complexity; the sequence is GTTNEAGEGT. The span at 248 to 273 shows a compositional bias: acidic residues; it reads TNEEGEGAANEYDAETLNEYDADTLN. The span at 294–306 shows a compositional bias: polar residues; sequence STTNEAGEGTSNE. Residues 312-332 show a composition bias toward acidic residues; that stretch reads ANDDEELDEEVASIFDDDEHA. Residues 349–371 are compositionally biased toward basic and acidic residues; the sequence is ENVKKGNENEGEQKGNENEGEQK. The tract at residues 353–370 is 2 X 9 AA tandem repeats; the sequence is KGNENEGEQKGNENEGEQ. Over residues 372–415 the composition is skewed to basic residues; that stretch reads GKKKKAKEKSKKKVKNKPTMTTKKKKKKEKKKKKKEKEKKKEKK.

The protein resides in the cell membrane. During infection, this phosphoprotein probably modulates the structure of the red cell membrane to the advantage of the parasite, although its precise function is not known. The chain is Acidic phosphoprotein (PCEMA1) from Plasmodium chabaudi.